We begin with the raw amino-acid sequence, 361 residues long: Nicotinate-nucleotide--dimethylbenzimidazole phosphoribosyltransferase (361 aa).

Residue glutamate 314 is the Proton acceptor of the active site.

It belongs to the CobT family.

The enzyme catalyses 5,6-dimethylbenzimidazole + nicotinate beta-D-ribonucleotide = alpha-ribazole 5'-phosphate + nicotinate + H(+). It participates in nucleoside biosynthesis; alpha-ribazole biosynthesis; alpha-ribazole from 5,6-dimethylbenzimidazole: step 1/2. Functionally, catalyzes the synthesis of alpha-ribazole-5'-phosphate from nicotinate mononucleotide (NAMN) and 5,6-dimethylbenzimidazole (DMB). The polypeptide is Nicotinate-nucleotide--dimethylbenzimidazole phosphoribosyltransferase (Mycobacterium bovis (strain BCG / Pasteur 1173P2)).